The chain runs to 429 residues: Probable M18 family aminopeptidase 2 (429 aa).

Residues His-82, His-156, and His-401 each contribute to the Zn(2+) site.

The protein belongs to the peptidase M18 family. Requires Zn(2+) as cofactor.

In Stutzerimonas stutzeri (strain A1501) (Pseudomonas stutzeri), this protein is Probable M18 family aminopeptidase 2.